Reading from the N-terminus, the 657-residue chain is DNA mismatch repair protein MutL (657 aa).

This sequence belongs to the DNA mismatch repair MutL/HexB family.

Functionally, this protein is involved in the repair of mismatches in DNA. It is required for dam-dependent methyl-directed DNA mismatch repair. May act as a 'molecular matchmaker', a protein that promotes the formation of a stable complex between two or more DNA-binding proteins in an ATP-dependent manner without itself being part of a final effector complex. In Streptococcus agalactiae serotype Ia (strain ATCC 27591 / A909 / CDC SS700), this protein is DNA mismatch repair protein MutL.